The following is a 243-amino-acid chain: Zwei Ig domain protein zig-6 (243 aa).

Residues 1-20 form the signal peptide; sequence MTKLCLLLLPLVFLVSYSFA. 2 Ig-like C2-type domains span residues 30–118 and 133–212; these read PNAN…MDVI and GQVL…KTVT. A disulfide bridge links cysteine 47 with cysteine 102. Asparagine 91 and asparagine 142 each carry an N-linked (GlcNAc...) asparagine glycan. Cysteine 145 and cysteine 196 form a disulfide bridge.

As to expression, expressed in head and tail body wall muscles.

Its subcellular location is the secreted. In terms of biological role, probably not involved in maintaining the position of ASI and ASH head neuron cell bodies and ventral nerve cord axons of PVQ, PVP, RMEV, AVK and HSN neurons. The protein is Zwei Ig domain protein zig-6 of Caenorhabditis elegans.